The following is a 104-amino-acid chain: NADH-quinone oxidoreductase subunit K (104 aa).

Transmembrane regions (helical) follow at residues leucine 7 to leucine 27, isoleucine 33 to phenylalanine 53, and leucine 67 to phenylalanine 87.

The protein belongs to the complex I subunit 4L family. In terms of assembly, NDH-1 is composed of 14 different subunits. Subunits NuoA, H, J, K, L, M, N constitute the membrane sector of the complex.

It is found in the cell inner membrane. It carries out the reaction a quinone + NADH + 5 H(+)(in) = a quinol + NAD(+) + 4 H(+)(out). Its function is as follows. NDH-1 shuttles electrons from NADH, via FMN and iron-sulfur (Fe-S) centers, to quinones in the respiratory chain. The immediate electron acceptor for the enzyme in this species is believed to be ubiquinone. Couples the redox reaction to proton translocation (for every two electrons transferred, four hydrogen ions are translocated across the cytoplasmic membrane), and thus conserves the redox energy in a proton gradient. The polypeptide is NADH-quinone oxidoreductase subunit K (Xanthobacter autotrophicus (strain ATCC BAA-1158 / Py2)).